A 299-amino-acid polypeptide reads, in one-letter code: tRNA pseudouridine synthase A (299 aa).

The Nucleophile role is filled by aspartate 67. Position 125 (tyrosine 125) interacts with substrate.

This sequence belongs to the tRNA pseudouridine synthase TruA family. Homodimer.

The enzyme catalyses uridine(38/39/40) in tRNA = pseudouridine(38/39/40) in tRNA. In terms of biological role, formation of pseudouridine at positions 38, 39 and 40 in the anticodon stem and loop of transfer RNAs. This chain is tRNA pseudouridine synthase A, found in Parasynechococcus marenigrum (strain WH8102).